Here is a 308-residue protein sequence, read N- to C-terminus: Phenylcoumaran benzylic ether reductase Betv6 (308 aa).

Residues G11 to G17, R36, and K45 each bind NADP(+). K133 (proton acceptor) is an active-site residue. R137 serves as a coordination point for NADP(+).

The protein belongs to the NmrA-type oxidoreductase family. Isoflavone reductase subfamily.

It carries out the reaction (-)-dehydrodiconiferyl alcohol + NADPH + H(+) = (S)-isodihydrodehydrodiconiferyl alcohol + NADP(+). The catalysed reaction is (+)-dehydrodiconiferyl alcohol + NADPH + H(+) = (R)-isodihydrodehydrodiconiferyl alcohol + NADP(+). Functionally, oxidoreductase involved in lignan biosynthesis. Catalyzes the NADPH-dependent reduction of phenylcoumaran benzylic ethers. Converts dehydrodiconiferyl alcohol (DDC) to isodihydrodehydrodiconiferyl alcohol (IDDDC). The sequence is that of Phenylcoumaran benzylic ether reductase Betv6 from Betula pendula (European white birch).